The following is a 236-amino-acid chain: Small ribosomal subunit protein uS3 (236 aa).

Residues 39–107 (IREILHKELK…DVVINIVEIR (69 aa)) form the KH type-2 domain. Positions 213–236 (MAQDKRMNEGGGESSQPRSRRDAA) are disordered.

It belongs to the universal ribosomal protein uS3 family. As to quaternary structure, part of the 30S ribosomal subunit. Forms a tight complex with proteins S10 and S14.

Binds the lower part of the 30S subunit head. Binds mRNA in the 70S ribosome, positioning it for translation. This chain is Small ribosomal subunit protein uS3, found in Bradyrhizobium sp. (strain BTAi1 / ATCC BAA-1182).